The primary structure comprises 164 residues: Cyclic pyranopterin monophosphate synthase (164 aa).

Residues 77–79 (LCH) and 115–116 (ME) each bind substrate. Asp130 is a catalytic residue.

Belongs to the MoaC family. Homohexamer; trimer of dimers.

The enzyme catalyses (8S)-3',8-cyclo-7,8-dihydroguanosine 5'-triphosphate = cyclic pyranopterin phosphate + diphosphate. It participates in cofactor biosynthesis; molybdopterin biosynthesis. Its function is as follows. Catalyzes the conversion of (8S)-3',8-cyclo-7,8-dihydroguanosine 5'-triphosphate to cyclic pyranopterin monophosphate (cPMP). The protein is Cyclic pyranopterin monophosphate synthase of Rhizobium meliloti (strain 1021) (Ensifer meliloti).